Reading from the N-terminus, the 356-residue chain is Protein translocase subunit SecY (356 aa).

The next 8 membrane-spanning stretches (helical) occupy residues 24 to 44, 77 to 97, 125 to 145, 154 to 174, 183 to 203, 217 to 237, 274 to 294, and 317 to 337; these read LFVI…IPGI, IFAL…LLTV, LVLA…MPGM, FAFY…LMWL, IGNG…PPAV, FLLL…VVFI, VIPA…ASWF, and YVLL…ALVF.

This sequence belongs to the SecY/SEC61-alpha family. Component of the Sec protein translocase complex. Heterotrimer consisting of SecY, SecE and SecG subunits. The heterotrimers can form oligomers, although 1 heterotrimer is thought to be able to translocate proteins. Interacts with the ribosome. Interacts with SecDF, and other proteins may be involved. Interacts with SecA.

The protein localises to the cell membrane. Its function is as follows. The central subunit of the protein translocation channel SecYEG. Consists of two halves formed by TMs 1-5 and 6-10. These two domains form a lateral gate at the front which open onto the bilayer between TMs 2 and 7, and are clamped together by SecE at the back. The channel is closed by both a pore ring composed of hydrophobic SecY resides and a short helix (helix 2A) on the extracellular side of the membrane which forms a plug. The plug probably moves laterally to allow the channel to open. The ring and the pore may move independently. The polypeptide is Protein translocase subunit SecY (Buchnera aphidicola subsp. Acyrthosiphon kondoi (Acyrthosiphon kondoi symbiotic bacterium)).